A 690-amino-acid polypeptide reads, in one-letter code: Protein AC23 (690 aa).

An N-terminal signal peptide occupies residues 1 to 37 (MLACKFSQYQAFIMDGVKLLGTCALIILLSTTSTVVG).

The protein localises to the virion. Pathogenicity factor that accelerates mortality in the host insect. This Autographa californica nuclear polyhedrosis virus (AcMNPV) protein is Protein AC23.